The primary structure comprises 80 residues: Consomatin Mrc1 (80 aa).

An N-terminal signal peptide occupies residues 1–22; the sequence is MQTAYWVMVMMMVWITAPLSEG. The propeptide occupies 23-57; that stretch reads GKLNDVIRGLVPDDVTPQLILRSLISRRPSDSVVR. C63 and C68 form a disulfide bridge. The residue at position 65 (W65) is a D-tryptophan. 4-hydroxyproline is present on residues P69, P70, P71, and P72. The propeptide occupies 74 to 80; that stretch reads RRPNGKG.

It belongs to the conotoxin C superfamily. Consomatin family. As to expression, expressed by the venom duct.

It is found in the secreted. Its function is as follows. Moderately activates human somatostatin receptors (SSTR) with a preferential activation of SSTR1 and SSTR4. In vivo, does not cause behavioral changes in mice within a few minutes of intracranial injection, but causes a progressive loss of movement thereafter. Four to five hours after injection, mice recover, even with the highest dose tested. Shows antinociception and antihyperalgesia activities in two mouse models of acute pain, most probably by acting outside the central nervous system. The sequence is that of Consomatin Mrc1 from Conus mercator (Trader cone).